The chain runs to 914 residues: MTAENTPLQGNLFVESEENLLDANSLQNTNSVKDSNLNDEELSKNAELRPRKRKKSVLLQNSVGEQTEDFSNDERPAWSHHSLVEINELTPVLRHYVELKQKHPERILLYRLGDFFECFFEDAIGLSELLELTLTGKEGGKKIGRVPMAGIPHHAAERYCSTLIQKGLSVAICDQLESIQNKEGKLLKRGITRILTPGTVLEEGMLQAKKNNWLAAILIESNSQTNQLKWGLASADISTGEFTVKEGNGIDTLEQDLLNIEASEIICEQLDVDISKKWQSNRIKITQQSKTSFSLQEAKAILKKHYNLKTINGLGLNETELALRAAGGLLYYLKETNPIHNIGVKNKCSKVVLDFPKNNLRGDSLIIDAQTRRNLELTKTQKDGHFQGSLLCAIDRTLTAMGGRCLRRWIENPLINSELILQRQRLITLLVEKRPLRKALRNLLRTMGDIERLSGRASAGQAGARELVAIADCLEKLPKLAANLQNLSINPPKWFSKLENINPELTKLAEEIKDKLIDNPPLSITEGNLINDSVDKILDGLRNQLDDQNEWLSNQEKKERNISGNNNLKLQHHRTFGYFLAVSKSKANTVPDHWIRRQTLANEERFVTPALKERESKIFQLKVKAANREYDLFCALRELVGGYAPIIRETAKAIAGLDVLLGLAELASTNNYCAPNIIDKKSLSNSRSINIKGCRHPVVEQMLVEEKFQANDIELGDGVDLIILTGPNASGKSCYLRQIGLIQILSQIGSWIPADKASISIADRVFTRVGAVDDLAAGQSTFMVEMAETAFILNQATQDSIVLLDEIGRGTSTFDGLSIAWSVSEFLAENIKSRTIFATHYHELNELAKKMGNVANFQVLVHETGEDIHFLHQVIPGGSNRSYGIEAARLAGVPKSVINRARGVLKRLEEKNKG.

The disordered stretch occupies residues 28 to 74; that stretch reads NTNSVKDSNLNDEELSKNAELRPRKRKKSVLLQNSVGEQTEDFSNDE. 726–733 contributes to the ATP binding site; that stretch reads GPNASGKS.

This sequence belongs to the DNA mismatch repair MutS family.

This protein is involved in the repair of mismatches in DNA. It is possible that it carries out the mismatch recognition step. This protein has a weak ATPase activity. This chain is DNA mismatch repair protein MutS, found in Prochlorococcus marinus (strain SARG / CCMP1375 / SS120).